The sequence spans 365 residues: 3-isopropylmalate dehydrogenase (365 aa).

An NAD(+)-binding site is contributed by 80 to 91 (GPKWGTGAVRPE). Residues arginine 98, arginine 108, arginine 137, and aspartate 226 each contribute to the substrate site. 3 residues coordinate Mg(2+): aspartate 226, aspartate 251, and aspartate 255. 290–301 (GSAPDLPKGKVN) serves as a coordination point for NAD(+).

This sequence belongs to the isocitrate and isopropylmalate dehydrogenases family. Homodimer. Mg(2+) serves as cofactor. The cofactor is Mn(2+).

It is found in the cytoplasm. It carries out the reaction (2R,3S)-3-isopropylmalate + NAD(+) = 4-methyl-2-oxopentanoate + CO2 + NADH. It participates in amino-acid biosynthesis; L-leucine biosynthesis; L-leucine from 3-methyl-2-oxobutanoate: step 3/4. Catalyzes the oxidation of 3-carboxy-2-hydroxy-4-methylpentanoate (3-isopropylmalate) to 3-carboxy-4-methyl-2-oxopentanoate. The product decarboxylates to 4-methyl-2 oxopentanoate. The sequence is that of 3-isopropylmalate dehydrogenase (LEU2) from Candida glabrata (strain ATCC 2001 / BCRC 20586 / JCM 3761 / NBRC 0622 / NRRL Y-65 / CBS 138) (Yeast).